Consider the following 60-residue polypeptide: Large ribosomal subunit protein bL32 (60 aa).

It belongs to the bacterial ribosomal protein bL32 family.

This is Large ribosomal subunit protein bL32 from Petrotoga mobilis (strain DSM 10674 / SJ95).